The sequence spans 441 residues: Trigger factor (441 aa).

One can recognise a PPIase FKBP-type domain in the interval 163–248; sequence GDQVVFDFVG…IKEVKKPVPA (86 aa).

This sequence belongs to the FKBP-type PPIase family. Tig subfamily.

The protein resides in the cytoplasm. It carries out the reaction [protein]-peptidylproline (omega=180) = [protein]-peptidylproline (omega=0). Its function is as follows. Involved in protein export. Acts as a chaperone by maintaining the newly synthesized protein in an open conformation. Functions as a peptidyl-prolyl cis-trans isomerase. In Jannaschia sp. (strain CCS1), this protein is Trigger factor.